A 769-amino-acid polypeptide reads, in one-letter code: Intron Large complex component GCFC2 (769 aa).

2 disordered regions span residues 1 to 122 (MALR…PIVE) and 134 to 212 (RKRE…DENQ). A phosphoserine mark is found at serine 16, serine 17, serine 19, and serine 85. At threonine 86 the chain carries Phosphothreonine. Phosphoserine occurs at positions 118 and 169. The segment covering 190 to 201 (RMAEETSIRSEE) has biased composition (basic and acidic residues). Residues 202-212 (SSEESQEDENQ) are compositionally biased toward acidic residues. Phosphoserine occurs at positions 203 and 206. Residues 256 to 308 (NLEIIKKQLNNRLTLLQESHRSHQREYEKYEQDIKSSKTAIQNLESASDHAQN) are a coiled coil.

It belongs to the GCF family. In terms of assembly, found in the Intron Large (IL) complex, a post-mRNA release spliceosomal complex containing the excised intron, U2, U5 and U6 snRNPs, and splicing factors. Interacts with TFIP11 and DHX15.

The protein resides in the nucleus. The protein localises to the nucleoplasm. Its subcellular location is the nucleolus. Involved in pre-mRNA splicing through regulating spliceosome C complex formation. May play a role during late-stage splicing events and turnover of excised introns. The chain is Intron Large complex component GCFC2 (Gcfc2) from Mus musculus (Mouse).